We begin with the raw amino-acid sequence, 283 residues long: Circadian clock oscillator protein KaiA (283 aa).

A psR domain, binds oxidized quinones region spans residues 3–133 (QSTALTICGL…VKLCPGCAVP (131 aa)). One can recognise a KaiA N-terminal domain in the interval 3–163 (QSTALTICGL…RLSQKLKERL (161 aa)). Residues 164–172 (GYLGVYYKR) form a flexible linker region. Residues 173 to 281 (DTAFFFRRMS…CEMYRRSIPR (109 aa)) form the KaiA C-terminal domain.

As to quaternary structure, homodimer. The KaiABC complex composition changes during the circadian cycle to control KaiC phosphorylation. Complexes KaiC(6), KaiA(2-4):KaiC(6), KaiB(6):KaiC(6) and KaiC(6):KaiB(6):KaiA(12) are among the most important forms, many form cooperatively. KaiA and CikA bind to the same region of the KaiB(fs) form and therefore compete.

Key component of the KaiABC oscillator complex, which constitutes the main circadian regulator in cyanobacteria. Complex composition changes during the circadian cycle to control KaiC phosphorylation. KaiA stimulates KaiC autophosphorylation, while KaiB sequesters KaiA, leading to KaiC autodephosphorylation. KaiA binding to the KaiC CII domain during the subjective day yields KaiA(2-4):KaiC(6) complexes which stimulate KaiC autophosphorylation. Phospho-Ser-431 KaiC accumulation triggers binding of KaiB during the subjective night to form the KaiB(6):KaiC(6) complex, leading to changes in the output regulators CikA and SasA. KaiB(6):KaiC(6) formation exposes a site for KaiA binding on KaiB that sequesters KaiA from KaiC's CII domain, making the KaiC(6):KaiB(6):KaiA(12) complex resulting in KaiC autodephosphorylation. Complete dephosphorylation of KaiC leads to dissociation of KaiA(2):KaiB(1), completing 1 cycle of the Kai oscillator. Functionally, binds oxidized quinones via the N-terminal PsR domain, allowing it to sense redox changes and possibly mediate clock input. The sequence is that of Circadian clock oscillator protein KaiA from Thermostichus vulcanus (Synechococcus vulcanus).